The sequence spans 635 residues: Probable Xaa-Pro aminopeptidase P (635 aa).

4 residues coordinate Mn(2+): Asp432, Asp443, Glu541, and Glu555.

Belongs to the peptidase M24B family. Mn(2+) serves as cofactor.

The enzyme catalyses Release of any N-terminal amino acid, including proline, that is linked to proline, even from a dipeptide or tripeptide.. Functionally, catalyzes the removal of a penultimate prolyl residue from the N-termini of peptides. In Arthroderma gypseum (strain ATCC MYA-4604 / CBS 118893) (Microsporum gypseum), this protein is Probable Xaa-Pro aminopeptidase P (AMPP).